The sequence spans 415 residues: Leucine-rich repeat-containing protein 34 (415 aa).

LRR repeat units follow at residues 246–272 and 274–296; these read SLRYLDVSCNKITRDGMVFLADVLKSN and TLEVLDLSFNRIETAGAKYLSET.

As to quaternary structure, interacts with NPM1 and NCL. As to expression, expressed in testis where it specifically localizes to germ cells (at protein level). Not detected in other tissues tested (at protein level). Expressed in pluripotent embryonic stem cells and multipotent adult germline stem cells.

The protein resides in the nucleus. It localises to the nucleolus. It is found in the cytoplasm. In terms of biological role, highly expressed in stem cells where it may be involved in regulation of pluripotency. In embryonic stem cells (ESCs), important for normal expression of the pluripotency regulators POU5F1/OCT4 and KLF4. Also important for expression of the ectodermal marker gene NES and the endodermal marker gene GATA4. Promotes stem cell proliferation in vitro. The chain is Leucine-rich repeat-containing protein 34 from Mus musculus (Mouse).